The following is a 569-amino-acid chain: Matrix metalloproteinase-21 (569 aa).

The N-terminal stretch at 1–24 (MLAASIFRPTLLLCWLAAPWPTQP) is a signal peptide. Residues 25–144 (ESLFHSRDRS…GPPPRARSRR (120 aa)) constitute a propeptide that is removed on maturation. Residues 115 to 122 (PRCGVPDM) carry the Cysteine switch motif. Residues 115-166 (PRCGVPDMRPPPPSAPPSPPGPPPRARSRRSPRAPLSLSRRGWQPRGYPDGG) are disordered. Residue Cys-117 coordinates Zn(2+). A compositionally biased stretch (pro residues) spans 122-139 (MRPPPPSAPPSPPGPPPR). A compositionally biased stretch (low complexity) spans 147 to 156 (RAPLSLSRRG). His-283 serves as a coordination point for Zn(2+). The active site involves Glu-284. Zn(2+) contacts are provided by His-287 and His-293. Cys-329 and Cys-560 are oxidised to a cystine. Hemopexin repeat units lie at residues 330–389 (EGSF…WPGI), 391–447 (THNI…FPGI), 448–496 (PSPL…FPAV), and 503–559 (FRNI…WFDV). N-linked (GlcNAc...) asparagine glycosylation is present at Asn-372.

This sequence belongs to the peptidase M10A family. The cofactor is Zn(2+). Ca(2+) is required as a cofactor. The precursor is cleaved by a furin endopeptidase. As to expression, identified in fetal brain, kidney and liver. In adult tissues found primarily in ovary, kidney, liver, lung, placenta, brain and peripheral blood leukocytes. Expressed as well in various cancer cell lines.

It localises to the secreted. In terms of biological role, plays a specialized role in the generation of left-right asymmetry during embryogenesis. May act as a negative regulator of the NOTCH-signaling pathway. Cleaves alpha-1-antitrypsin. The protein is Matrix metalloproteinase-21 (MMP21) of Homo sapiens (Human).